Consider the following 1463-residue polypeptide: Probable ATP-dependent RNA helicase spindle-E (1463 aa).

Residues 131-296 (LKAIRENPVV…FKIPGPNSLF (166 aa)) form the Helicase ATP-binding domain. An ATP-binding site is contributed by 144 to 151 (GMTGCGKT). A DEAH box motif is present at residues 243 to 246 (DEVH). The Helicase C-terminal domain maps to 348–531 (VCDRFIDEFE…NVVLKTKLLD (184 aa)). A Tudor domain is found at 951–1016 (AFKQRDIVAA…QLRGTPLDMF (66 aa)).

This sequence belongs to the DEAD box helicase family. DEAH subfamily.

It localises to the cytoplasm. The catalysed reaction is ATP + H2O = ADP + phosphate + H(+). In terms of biological role, probable ATP-binding RNA helicase which plays a central role during gametogenesis by repressing transposable elements and preventing their mobilization, which is essential for the germline integrity. Acts via the piRNA metabolic process, which mediates the repression of transposable elements during meiosis by forming complexes composed of piRNAs and Piwi proteins and govern the methylation and subsequent repression of transposons. The protein is Probable ATP-dependent RNA helicase spindle-E (spn-E) of Anopheles gambiae (African malaria mosquito).